The chain runs to 504 residues: ATP synthase subunit alpha (504 aa).

ATP is bound at residue 171-178 (GDRQTGKT).

This sequence belongs to the ATPase alpha/beta chains family. F-type ATPases have 2 components, CF(1) - the catalytic core - and CF(0) - the membrane proton channel. CF(1) has five subunits: alpha(3), beta(3), gamma(1), delta(1), epsilon(1). CF(0) has three main subunits: a(1), b(2) and c(9-12). The alpha and beta chains form an alternating ring which encloses part of the gamma chain. CF(1) is attached to CF(0) by a central stalk formed by the gamma and epsilon chains, while a peripheral stalk is formed by the delta and b chains.

It localises to the cell inner membrane. It catalyses the reaction ATP + H2O + 4 H(+)(in) = ADP + phosphate + 5 H(+)(out). In terms of biological role, produces ATP from ADP in the presence of a proton gradient across the membrane. The alpha chain is a regulatory subunit. This is ATP synthase subunit alpha from Sulfurovum sp. (strain NBC37-1).